Consider the following 395-residue polypeptide: uncharacterized protein (395 aa).

Disordered regions lie at residues 1 to 121, 136 to 187, 308 to 335, and 365 to 395; these read MLLP…TANS, MRMK…LDRN, QNNEDTIRKSVPPSREPGSKMMTVSKDE, and IQKFRKKYQKQLKKSQEEKKDDTKTAKNEGD. Basic and acidic residues predominate over residues 13 to 28; the sequence is PKGEAKSLVARERKSQ. Basic residues predominate over residues 64 to 73; it reads KSAKLRRKKS. The span at 97–111 shows a compositional bias: basic and acidic residues; sequence SIEKKKEEMTSKLPE. Over residues 144 to 164 the composition is skewed to polar residues; the sequence is TSRMATKSDSSLETMPESSHN. A compositionally biased stretch (basic residues) spans 170–179; that stretch reads KSRKSQRTRG. Positions 365–377 are enriched in basic residues; the sequence is IQKFRKKYQKQLK. Over residues 378–395 the composition is skewed to basic and acidic residues; it reads KSQEEKKDDTKTAKNEGD.

This is an uncharacterized protein from Caenorhabditis elegans.